Consider the following 334-residue polypeptide: Glycerol-3-phosphate dehydrogenase [NAD(P)+] (334 aa).

Positions 14, 15, 35, and 109 each coordinate NADPH. Residues Lys109, Gly138, and Thr140 each contribute to the sn-glycerol 3-phosphate site. Ala142 provides a ligand contact to NADPH. Sn-glycerol 3-phosphate-binding residues include Lys194, Asp247, Ser257, Arg258, and Asn259. The Proton acceptor role is filled by Lys194. Arg258 provides a ligand contact to NADPH. The NADPH site is built by Val282 and Glu284.

This sequence belongs to the NAD-dependent glycerol-3-phosphate dehydrogenase family.

It is found in the cytoplasm. The enzyme catalyses sn-glycerol 3-phosphate + NAD(+) = dihydroxyacetone phosphate + NADH + H(+). It catalyses the reaction sn-glycerol 3-phosphate + NADP(+) = dihydroxyacetone phosphate + NADPH + H(+). It functions in the pathway membrane lipid metabolism; glycerophospholipid metabolism. Functionally, catalyzes the reduction of the glycolytic intermediate dihydroxyacetone phosphate (DHAP) to sn-glycerol 3-phosphate (G3P), the key precursor for phospholipid synthesis. This Colwellia psychrerythraea (strain 34H / ATCC BAA-681) (Vibrio psychroerythus) protein is Glycerol-3-phosphate dehydrogenase [NAD(P)+].